The chain runs to 270 residues: Molybdenum storage protein subunit beta (270 aa).

As to quaternary structure, octamer consisting of 4 alpha and 4 beta chains.

The protein resides in the cytoplasm. Its function is as follows. Intracellular storage of molybdenum. Binds polyoxomolybdates. Can bind at least 90 molybdenum atoms per protein molecule. This Azotobacter vinelandii (strain DJ / ATCC BAA-1303) protein is Molybdenum storage protein subunit beta.